The chain runs to 151 residues: UPF0178 protein Shal_3046 (151 aa).

Belongs to the UPF0178 family.

This Shewanella halifaxensis (strain HAW-EB4) protein is UPF0178 protein Shal_3046.